The following is a 535-amino-acid chain: Intercellular adhesion molecule 1 (535 aa).

An N-terminal signal peptide occupies residues 1–27; sequence MALGAAPAAQLALLALLGTLLPGPGGA. At 28 to 480 the chain is on the extracellular side; sequence GISIHPSKAI…LNVLHGQNIL (453 aa). An Ig-like C2-type 1 domain is found at 41-102; the sequence is GDSLTVNCSN…SNCHKEQTIA (62 aa). A glycan (N-linked (GlcNAc...) asparagine) is linked at Asn-47. 2 disulfide bridges follow: Cys-48/Cys-91 and Cys-52/Cys-95. 2 N-linked (GlcNAc...) asparagine glycosylation sites follow: Asn-105 and Asn-131. Residues 127 to 193 enclose the Ig-like C2-type 2 domain; sequence GEELNLSCLV…FSCRWELDLR (67 aa). A disulfide bond links Cys-134 and Cys-186. The short motif at 151 to 153 is the Cell attachment site; atypical element; sequence RGE. 10 N-linked (GlcNAc...) asparagine glycosylation sites follow: Asn-183, Asn-202, Asn-236, Asn-262, Asn-302, Asn-341, Asn-357, Asn-366, Asn-404, and Asn-428. One can recognise an Ig-like C2-type 3 domain in the interval 230-295; it reads GSRWPVNCTL…LKCSVTLGEV (66 aa). Cys-237 and Cys-288 are disulfide-bonded. The region spanning 323 to 376 is the Ig-like C2-type 4 domain; that stretch reads WTTVTVECVTRDGAVVKLNGTSAVPPGPRAQLKLNASASDHRSNFSCSAALEIA. Disulfide bonds link Cys-330–Cys-369, Cys-401–Cys-417, Cys-417–Cys-456, and Cys-429–Cys-456. Positions 410-463 constitute an Ig-like C2-type 5 domain; the sequence is GSEQTLKCEAQGNPIPKLNCSRKGDGASLPIGDLRPVRREVAGTYLCRATSARG. A helical transmembrane segment spans residues 481 to 503; that stretch reads DIVIPVVAVTLILGALGTAGYVY. Residues 504–535 are Cytoplasmic-facing; sequence NYQRKIQKYELQKARKAQEEAALKLNAQSTPP. Residue Thr-533 is modified to Phosphothreonine.

Belongs to the immunoglobulin superfamily. ICAM family. Homodimer. Interacts with MUC1 and promotes cell aggregation in epithelial cells. Interacts with ARHGEF26/SGEF. Interacts (on T cell side) with CD81, CD247 and CD9 at immunological synapses between antigen-presenting cells and T cells. Post-translationally, monoubiquitinated, which is promoted by MARCH9 and leads to endocytosis.

The protein localises to the membrane. Functionally, ICAM proteins are ligands for the leukocyte adhesion protein LFA-1 (integrin alpha-L/beta-2). During leukocyte trans-endothelial migration, ICAM1 engagement promotes the assembly of endothelial apical cups through ARHGEF26/SGEF and RHOG activation. The polypeptide is Intercellular adhesion molecule 1 (ICAM1) (Bos taurus (Bovine)).